Here is a 900-residue protein sequence, read N- to C-terminus: Iodate reductase subunit IdrA (900 aa).

The disordered stretch occupies residues 1–21 (MSENIKQGGAGTFMQAPQDSV). [3Fe-4S] cluster is bound by residues Cys35, Cys38, and Cys42.

This sequence belongs to the prokaryotic molybdopterin-containing oxidoreductase family. The iodate reductase (Idr) complex is composed of a molybdopterin-dependent iodate reductase (IdrA and IdrB subunits) and two associated peroxidases (IdrP1 and IdrP2). It depends on [3Fe-4S] cluster as a cofactor. The cofactor is Mo-bis(molybdopterin guanine dinucleotide).

It is found in the periplasm. Functionally, involved in iodate respiration. May accept electrons from cytochrome c551, and catalyze the reduction of iodate (IO(3)(-)) to produce the chemically unstable intermediate hypoiodous acid (HIO). This intermediate then undergoes abiotic disproportionation to yield two molecules of iodide (I(-)) and one molecule of iodate. The resultant iodate subsequently cycles back into the reductive pathway. The initial reduction of iodate may inadvertently produce low levels of incidental toxic H(2)O(2), which is detoxified by IdrP1 and IdrP2. The chain is Iodate reductase subunit IdrA from Denitromonas iodatirespirans.